The primary structure comprises 219 residues: Large ribosomal subunit protein uL1 (219 aa).

Belongs to the universal ribosomal protein uL1 family. As to quaternary structure, part of the 50S ribosomal subunit.

Its function is as follows. Probably involved in E site tRNA release. Binds directly to 23S rRNA. In terms of biological role, protein L1 is also a translational repressor protein, it controls the translation of its operon by binding to its mRNA. The protein is Large ribosomal subunit protein uL1 of Methanocaldococcus jannaschii (strain ATCC 43067 / DSM 2661 / JAL-1 / JCM 10045 / NBRC 100440) (Methanococcus jannaschii).